A 135-amino-acid chain; its full sequence is uncharacterized protein (135 aa).

This is an uncharacterized protein from Fowl adenovirus A serotype 1 (strain CELO / Phelps) (FAdV-1).